The following is a 550-amino-acid chain: Dihydroxy-acid dehydratase (550 aa).

D78 provides a ligand contact to Mg(2+). C119 lines the [2Fe-2S] cluster pocket. Residues D120 and K121 each contribute to the Mg(2+) site. Residue K121 is modified to N6-carboxylysine. C192 is a binding site for [2Fe-2S] cluster. E440 serves as a coordination point for Mg(2+). S466 serves as the catalytic Proton acceptor.

This sequence belongs to the IlvD/Edd family. As to quaternary structure, homodimer. It depends on [2Fe-2S] cluster as a cofactor. Requires Mg(2+) as cofactor.

It catalyses the reaction (2R)-2,3-dihydroxy-3-methylbutanoate = 3-methyl-2-oxobutanoate + H2O. The enzyme catalyses (2R,3R)-2,3-dihydroxy-3-methylpentanoate = (S)-3-methyl-2-oxopentanoate + H2O. The protein operates within amino-acid biosynthesis; L-isoleucine biosynthesis; L-isoleucine from 2-oxobutanoate: step 3/4. It participates in amino-acid biosynthesis; L-valine biosynthesis; L-valine from pyruvate: step 3/4. Functions in the biosynthesis of branched-chain amino acids. Catalyzes the dehydration of (2R,3R)-2,3-dihydroxy-3-methylpentanoate (2,3-dihydroxy-3-methylvalerate) into 2-oxo-3-methylpentanoate (2-oxo-3-methylvalerate) and of (2R)-2,3-dihydroxy-3-methylbutanoate (2,3-dihydroxyisovalerate) into 2-oxo-3-methylbutanoate (2-oxoisovalerate), the penultimate precursor to L-isoleucine and L-valine, respectively. In Thermodesulfovibrio yellowstonii (strain ATCC 51303 / DSM 11347 / YP87), this protein is Dihydroxy-acid dehydratase.